The following is a 547-amino-acid chain: Oncoprotein-induced transcript 3 protein (547 aa).

The first 19 residues, 1–19 (MPQLLLLACLLIIVTRVAP), serve as a signal peptide directing secretion. N-linked (GlcNAc...) asparagine glycosylation is found at asparagine 89 and asparagine 116. Positions 182 to 222 (DENECEQNNGGCSEICVNLKNSYRCECGIGRVLRSDGKTCE) constitute an EGF-like; calcium-binding domain. 3 cysteine pairs are disulfide-bonded: cysteine 186–cysteine 197, cysteine 193–cysteine 206, and cysteine 208–cysteine 221. One can recognise a ZP domain in the interval 267–516 (FCKSNTIEVS…SRCAQGCHRR (250 aa)). Asparagine 299 carries N-linked (GlcNAc...) asparagine glycosylation. Residues 520–547 (EASTEGEDASGPRSQMLTGGPISIDWED) are disordered.

It localises to the nucleus envelope. Functionally, may be involved in hepatocellular function and development. The sequence is that of Oncoprotein-induced transcript 3 protein (OIT3) from Bos taurus (Bovine).